The following is a 142-amino-acid chain: U1 small nuclear ribonucleoprotein C (142 aa).

The Matrin-type zinc-finger motif lies at 4 to 36 (YYCDYCDTFLTHDSPSVRKTHNGGRKHKDNVRM).

The protein belongs to the U1 small nuclear ribonucleoprotein C family. In terms of assembly, U1 snRNP is composed of the 7 core Sm proteins B/B', D1, D2, D3, E, F and G that assemble in a heptameric protein ring on the Sm site of the small nuclear RNA to form the core snRNP, and at least 3 U1 snRNP-specific proteins U1-70K, U1-A and U1-C. U1-C interacts with U1 snRNA and the 5' splice-site region of the pre-mRNA.

It localises to the nucleus. In terms of biological role, component of the spliceosomal U1 snRNP, which is essential for recognition of the pre-mRNA 5' splice-site and the subsequent assembly of the spliceosome. U1-C is directly involved in initial 5' splice-site recognition for both constitutive and regulated alternative splicing. The interaction with the 5' splice-site seems to precede base-pairing between the pre-mRNA and the U1 snRNA. Stimulates commitment or early (E) complex formation by stabilizing the base pairing of the 5' end of the U1 snRNA and the 5' splice-site region. The polypeptide is U1 small nuclear ribonucleoprotein C (Caenorhabditis elegans).